The sequence spans 126 residues: Large ribosomal subunit protein bL12 (126 aa).

This sequence belongs to the bacterial ribosomal protein bL12 family. As to quaternary structure, homodimer. Part of the ribosomal stalk of the 50S ribosomal subunit. Forms a multimeric L10(L12)X complex, where L10 forms an elongated spine to which 2 to 4 L12 dimers bind in a sequential fashion. Binds GTP-bound translation factors.

Forms part of the ribosomal stalk which helps the ribosome interact with GTP-bound translation factors. Is thus essential for accurate translation. The chain is Large ribosomal subunit protein bL12 from Coxiella burnetii (strain CbuK_Q154) (Coxiella burnetii (strain Q154)).